The primary structure comprises 385 residues: Glutamate 5-kinase (385 aa).

K17 contacts ATP. The substrate site is built by S64, D151, and N165. 185 to 186 (SD) is a binding site for ATP. The PUA domain maps to 291 to 367 (SGTVRVDAGA…NQIDNILGYN (77 aa)).

It belongs to the glutamate 5-kinase family.

It localises to the cytoplasm. The catalysed reaction is L-glutamate + ATP = L-glutamyl 5-phosphate + ADP. The protein operates within amino-acid biosynthesis; L-proline biosynthesis; L-glutamate 5-semialdehyde from L-glutamate: step 1/2. Catalyzes the transfer of a phosphate group to glutamate to form L-glutamate 5-phosphate. In Methanosarcina acetivorans (strain ATCC 35395 / DSM 2834 / JCM 12185 / C2A), this protein is Glutamate 5-kinase.